The primary structure comprises 359 residues: 3-dehydroquinate synthase (359 aa).

NAD(+) contacts are provided by residues 71 to 76 (DGEAHK), 105 to 109 (GVIGD), 129 to 130 (TT), Lys142, Lys151, and 169 to 172 (TLHT). Zn(2+) is bound by residues Glu184, His247, and His264.

Belongs to the sugar phosphate cyclases superfamily. Dehydroquinate synthase family. Co(2+) serves as cofactor. The cofactor is Zn(2+). Requires NAD(+) as cofactor.

Its subcellular location is the cytoplasm. The catalysed reaction is 7-phospho-2-dehydro-3-deoxy-D-arabino-heptonate = 3-dehydroquinate + phosphate. Its pathway is metabolic intermediate biosynthesis; chorismate biosynthesis; chorismate from D-erythrose 4-phosphate and phosphoenolpyruvate: step 2/7. Its function is as follows. Catalyzes the conversion of 3-deoxy-D-arabino-heptulosonate 7-phosphate (DAHP) to dehydroquinate (DHQ). This Neisseria gonorrhoeae (strain ATCC 700825 / FA 1090) protein is 3-dehydroquinate synthase.